The chain runs to 474 residues: Glutamine synthetase (474 aa).

The 85-residue stretch at 15–99 (EDVQFIDVRF…MTFFIHDPIT (85 aa)) folds into the GS beta-grasp domain. Residues 107–474 (PRNIAKKAET…PYEFTLYYDI (368 aa)) form the GS catalytic domain. 2 residues coordinate Mg(2+): Glu-132 and Glu-134. Glu-210 contributes to the ATP binding site. Positions 215 and 223 each coordinate Mg(2+). L-glutamate is bound by residues 267-268 (NG) and Gly-268. His-272 lines the Mg(2+) pocket. ATP is bound by residues 274–276 (HSS) and Ser-276. L-glutamate contacts are provided by Arg-325, Glu-331, and Arg-343. ATP-binding residues include Arg-343, Arg-348, and Lys-357. Residue Glu-362 participates in Mg(2+) binding. Arg-364 provides a ligand contact to L-glutamate. O-AMP-tyrosine is present on Tyr-402.

Belongs to the glutamine synthetase family. In terms of assembly, oligomer of 12 subunits arranged in the form of two hexagons. The cofactor is Mg(2+).

The protein resides in the cytoplasm. The enzyme catalyses L-glutamate + NH4(+) + ATP = L-glutamine + ADP + phosphate + H(+). The activity of this enzyme could be controlled by adenylation under conditions of abundant glutamine. Its function is as follows. Catalyzes the ATP-dependent biosynthesis of glutamine from glutamate and ammonia. This Frankia alni protein is Glutamine synthetase.